The sequence spans 296 residues: Ribosomal RNA small subunit methyltransferase A (296 aa).

S-adenosyl-L-methionine contacts are provided by asparagine 30, leucine 32, glycine 57, glutamate 78, aspartate 103, and asparagine 128.

It belongs to the class I-like SAM-binding methyltransferase superfamily. rRNA adenine N(6)-methyltransferase family. RsmA subfamily.

It is found in the cytoplasm. The enzyme catalyses adenosine(1518)/adenosine(1519) in 16S rRNA + 4 S-adenosyl-L-methionine = N(6)-dimethyladenosine(1518)/N(6)-dimethyladenosine(1519) in 16S rRNA + 4 S-adenosyl-L-homocysteine + 4 H(+). Its function is as follows. Specifically dimethylates two adjacent adenosines (A1518 and A1519) in the loop of a conserved hairpin near the 3'-end of 16S rRNA in the 30S particle. May play a critical role in biogenesis of 30S subunits. This Staphylococcus haemolyticus (strain JCSC1435) protein is Ribosomal RNA small subunit methyltransferase A.